A 241-amino-acid polypeptide reads, in one-letter code: Glutamate/aspartate import ATP-binding protein GltL (241 aa).

Positions I2–L236 constitute an ABC transporter domain. G34 to S41 is an ATP binding site.

The protein belongs to the ABC transporter superfamily. In terms of assembly, the complex is composed of two ATP-binding proteins (GltL), two transmembrane proteins (GltJ and GltK) and a solute-binding protein (GltI).

The protein resides in the cell inner membrane. It carries out the reaction a polar amino acid(out) + ATP + H2O = a polar amino acid(in) + ADP + phosphate + H(+). The catalysed reaction is L-glutamate(out) + ATP + H2O = L-glutamate(in) + ADP + phosphate + H(+). The enzyme catalyses L-aspartate(out) + ATP + H2O = L-aspartate(in) + ADP + phosphate + H(+). Functionally, part of the ABC transporter complex GltIJKL involved in glutamate and aspartate uptake. Probably responsible for energy coupling to the transport system. This chain is Glutamate/aspartate import ATP-binding protein GltL (gltL), found in Escherichia coli O157:H7.